The sequence spans 163 residues: Shikimate kinase (163 aa).

Gly-10 to Thr-15 contributes to the ATP binding site. Thr-14 lines the Mg(2+) pocket. Positions 28, 52, and 75 each coordinate substrate. Residue Arg-116 participates in ATP binding. Residue Arg-134 participates in substrate binding. Arg-151 contacts ATP.

It belongs to the shikimate kinase family. Monomer. Requires Mg(2+) as cofactor.

The protein localises to the cytoplasm. It catalyses the reaction shikimate + ATP = 3-phosphoshikimate + ADP + H(+). Its pathway is metabolic intermediate biosynthesis; chorismate biosynthesis; chorismate from D-erythrose 4-phosphate and phosphoenolpyruvate: step 5/7. Functionally, catalyzes the specific phosphorylation of the 3-hydroxyl group of shikimic acid using ATP as a cosubstrate. In Streptococcus pyogenes serotype M49 (strain NZ131), this protein is Shikimate kinase.